Here is a 419-residue protein sequence, read N- to C-terminus: MDYLEIKGGKKLFGSVYISGAKNAALPLIAMSILAKNDVVIRNIPQVADIKTLIKLLQNLGAVSKFENLDLVINTTTINSTKATYDIVRKMRASILVLGPLLARFGHCEVSLPGGCAIGARPIDLHLSALEKMGANIEIKDGYVIARAKDGLKGANIIFDKITVTGTENIVMAAALARGTTKILNAAKEPEVVQVCQILNDSGIKIEGIGTNELTIYGGGGELLNLNKICVIPDRIEAGTYLCAAAIAGGEITLKQVEPNHLVSVLGKLSDMGVNFELGDKSIKVISDAKLSPVQIITTEFPGFPTDMQAQFMALACVANGVSTIDERLFENRFMHASELNRMGADIKLNGHIATVSGVSLNGADVMATDLRASSALVLAALVANGTTRVHRIYHLDRGYENLEIKLQSLGADIKRLSE.

Residue 22–23 coordinates phosphoenolpyruvate; sequence KN. Residue arginine 92 coordinates UDP-N-acetyl-alpha-D-glucosamine. The Proton donor role is filled by cysteine 116. Cysteine 116 is modified (2-(S-cysteinyl)pyruvic acid O-phosphothioketal). UDP-N-acetyl-alpha-D-glucosamine contacts are provided by residues 121–125, aspartate 307, and leucine 329; that span reads RPIDL.

Belongs to the EPSP synthase family. MurA subfamily.

It is found in the cytoplasm. The enzyme catalyses phosphoenolpyruvate + UDP-N-acetyl-alpha-D-glucosamine = UDP-N-acetyl-3-O-(1-carboxyvinyl)-alpha-D-glucosamine + phosphate. It functions in the pathway cell wall biogenesis; peptidoglycan biosynthesis. Its function is as follows. Cell wall formation. Adds enolpyruvyl to UDP-N-acetylglucosamine. The sequence is that of UDP-N-acetylglucosamine 1-carboxyvinyltransferase from Campylobacter fetus subsp. fetus (strain 82-40).